A 93-amino-acid chain; its full sequence is Small ribosomal subunit protein uS19 (93 aa).

It belongs to the universal ribosomal protein uS19 family.

Protein S19 forms a complex with S13 that binds strongly to the 16S ribosomal RNA. The protein is Small ribosomal subunit protein uS19 of Blochmanniella floridana.